We begin with the raw amino-acid sequence, 928 residues long: Diacylglycerol kinase zeta (928 aa).

Residues 1 to 14 (MEPRDGSPEARSSD) show a composition bias toward basic and acidic residues. 2 disordered regions span residues 1 to 46 (MEPR…RRFP) and 59 to 82 (KSGLQHLAPPPPTPGAPCSESERQ). Over residues 15 to 24 (SESASASSSG) the composition is skewed to low complexity. The span at 25–37 (SERDAGPEPDKAP) shows a compositional bias: basic and acidic residues. 2 Phorbol-ester/DAG-type zinc fingers span residues 98–152 (HIWF…NFRC) and 172–230 (HHWV…EEPC). The segment at 251-280 (PQNTLKASKKKKRASFKRKSSKKGPEEGRW) is disordered. Residues 257–272 (ASKKKKRASFKRKSSK) show a composition bias toward basic residues. Positions 259–273 (KKKKRASFKRKSSKK) are MARCKS homology. The tract at residues 278 to 416 (GRWRPFIIRP…HVEEGNVVQL (139 aa)) is mediates interaction with RASGRP1. Positions 291 to 425 (PLMKPLLVFV…LDRWDLHAEP (135 aa)) constitute a DAGKc domain. A Nuclear export signal motif is present at residues 361 to 369 (LSTLDQLRL). Phosphoserine is present on S705. The tract at residues 759–788 (ARPDLPTPTSPLPTSPCSPTPRSLQGDAAP) is disordered. Residues 763–777 (LPTPTSPLPTSPCSP) show a composition bias toward pro residues. The residue at position 781 (S781) is a Phosphoserine. ANK repeat units lie at residues 822 to 852 (QSRTLLHHAVSTGSKDVVRYLLDHAPPEILD) and 857 to 886 (NGETCLHQAAALGQRTICHYIVEAGASLMK). A PDZ-binding motif is present at residues 924-928 (QETAV).

This sequence belongs to the eukaryotic diacylglycerol kinase family. In terms of assembly, interacts (via PDZ-binding motif) with the PDZ domain of the syntrophin SNTG1 and that of SNX27. Interacts with IRS1 in the absence of insulin; insulin stimulation decreases this interaction. Found in a ternary complex with IRS1 and PIP5K1A in the absence of insulin. Interacts with PIP5K1A. Forms a signaling complex with RASGRP1 and HRAS. Post-translationally, phosphorylation of the MARCKS homology domain by PKC reduces nuclear accumulation of DGK-zeta. Highest levels in brain, and substantial levels in skeletal muscle, heart, and pancreas. In terms of tissue distribution, predominantly expressed in muscle.

It is found in the nucleus. The protein resides in the cytoplasm. Its subcellular location is the cytosol. The protein localises to the cell membrane. It localises to the cell projection. It is found in the lamellipodium. The catalysed reaction is a 1,2-diacyl-sn-glycerol + ATP = a 1,2-diacyl-sn-glycero-3-phosphate + ADP + H(+). It carries out the reaction a 1-O-alkyl-sn-glycerol + ATP = a 1-O-alkyl-sn-glycero-3-phosphate + ADP + H(+). It catalyses the reaction 1-O-alkyl-2-acyl-sn-glycerol + ATP = 1-O-alkyl-2-acyl-sn-glycero-3-phosphate + ADP + H(+). The enzyme catalyses 1,2-didecanoyl-sn-glycerol + ATP = 1,2-didecanoyl-sn-glycero-3-phosphate + ADP + H(+). The catalysed reaction is 1,2-ditetradecanoyl-sn-glycerol + ATP = 1,2-ditetradecanoyl-sn-glycero-3-phosphate + ADP + H(+). It carries out the reaction 1-hexadecanoyl-2-(9Z-octadecenoyl)-sn-glycerol + ATP = 1-hexadecanoyl-2-(9Z-octadecenoyl)-sn-glycero-3-phosphate + ADP + H(+). It catalyses the reaction 1-hexadecanoyl-2-(5Z,8Z,11Z,14Z-eicosatetraenoyl)-sn-glycerol + ATP = 1-hexadecanoyl-2-(5Z,8Z,11Z,14Z-eicosatetraenoyl)-sn-glycero-3-phosphate + ADP + H(+). The enzyme catalyses 1-octadecanoyl-2-(9Z-octadecenoyl)-sn-glycerol + ATP = 1-octadecanoyl-2-(9Z-octadecenoyl)-sn-glycero-3-phosphate + ADP + H(+). The catalysed reaction is 1-octadecanoyl-2-(5Z,8Z,11Z,14Z-eicosatetraenoyl)-sn-glycerol + ATP = 1-octadecanoyl-2-(5Z,8Z,11Z,14Z-eicosatetraenoyl)-sn-glycero-3-phosphate + ADP + H(+). It carries out the reaction 1-octadecanoyl-2-(4Z,7Z,10Z,13Z,16Z,19Z-docosahexaenoyl)-sn-glycerol + ATP = 1-octadecanoyl-2-(4Z,7Z,10Z,13Z,16Z,19Z-docosahexaenoyl)-sn-glycero-3-phosphate + ADP + H(+). It catalyses the reaction 1,2-di-(9Z-octadecenoyl)-sn-glycerol + ATP = 1,2-di-(9Z-octadecenoyl)-sn-glycero-3-phosphate + ADP + H(+). The enzyme catalyses 1-(9Z-octadecenoyl)-2-hexadecanoyl-sn-glycerol + ATP = 1-(9Z)-octadecenoyl-2-hexadecanoyl-sn-glycero-3-phosphate + ADP + H(+). The catalysed reaction is 1-eicosanoyl-2-(5Z,8Z,11Z,14Z)-eicosatetraenoyl-sn-glycerol + ATP = 1-eicosanoyl-2-(5Z,8Z,11Z,14Z)-eicosatetraenoyl-sn-glycero-3-phosphate + ADP + H(+). It carries out the reaction 1,2-di-(5Z,8Z,11Z,14Z)-eicosatetraenoyl-sn-glycerol + ATP = 1,2-di-(5Z,8Z,11Z,14Z)-eicosatetraenoyl-sn-glycero-3-phosphate + ADP + H(+). It catalyses the reaction 1-O-hexadecyl-2-acetyl-sn-glycerol + ATP = 1-O-hexadecyl-2-acetyl-sn-glycero-3-phosphate + ADP + H(+). The enzyme catalyses 1-O-hexadecyl-2-(5Z,8Z,11Z,14Z-eicosatetraenoyl)-sn-glycerol + ATP = 1-O-hexadecyl-2-(5Z,8Z,11Z,14Z-eicosatetraenoyl)-sn-glycero-3-phosphate + ADP + H(+). The catalysed reaction is 1-O-hexadecyl-2-(9Z-octadecenoyl)-sn-glycerol + ATP = 1-O-hexadecyl-2-(9Z-octadecenoyl)-sn-glycero-3-phosphate + ADP + H(+). It carries out the reaction 1-O-hexadecyl-sn-glycerol + ATP = 1-O-hexadecyl-sn-glycero-3-phosphate + ADP + H(+). It functions in the pathway lipid metabolism; glycerolipid metabolism. Activated by 1,2-diacyl-sn-glycero-3-phosphate/phosphatidic acid irrespective of its acyl chain composition. Its function is as follows. Diacylglycerol kinase that converts diacylglycerol/DAG into phosphatidic acid/phosphatidate/PA and regulates the respective levels of these two bioactive lipids. Thereby, acts as a central switch between the signaling pathways activated by these second messengers with different cellular targets and opposite effects in numerous biological processes. Also plays an important role in the biosynthesis of complex lipids. Does not exhibit an acyl chain-dependent substrate specificity among diacylglycerol species. Can also phosphorylate 1-alkyl-2-acylglycerol in vitro but less efficiently and with a preference for alkylacylglycerols containing an arachidonoyl group. The biological processes it is involved in include T cell activation since it negatively regulates T-cell receptor signaling which is in part mediated by diacylglycerol. By generating phosphatidic acid, stimulates PIP5KIA activity which regulates actin polymerization. Through the same mechanism could also positively regulate insulin-induced translocation of SLC2A4 to the cell membrane. Functionally, regulates RASGRP1 activity. Does not regulate RASGRP1 activity. The chain is Diacylglycerol kinase zeta from Homo sapiens (Human).